The sequence spans 972 residues: Translation initiation factor IF-2 (972 aa).

The span at 49-63 shows a compositional bias: basic and acidic residues; the sequence is HLRKSHGATDGDKRK. 2 disordered regions span residues 49-86 and 100-383; these read HLRKSHGATDGDKRKITLTRKHTSEIKQSDATGKARTI and DDVA…TFQA. Residues 105–114 are compositionally biased toward low complexity; that stretch reads GAEQGQAQVA. Basic and acidic residues predominate over residues 121–177; sequence ELKRREEEARREAELLEKQAQELRERQERLEREEAERRAREEAAEAERRRAEEEAAA. A compositionally biased stretch (low complexity) spans 178 to 209; sequence KRAAAAAVEAQQAAAQQAAEAQQETAGAQSAQ. Basic and acidic residues predominate over residues 210–261; it reads DEARAAAERAAQREAAKKAEDAAREAADKTRAEQEEIRKRREAAEAEARAIR. The segment covering 277–286 has biased composition (pro residues); sequence PPKPVEPPKP. A compositionally biased stretch (low complexity) spans 298–327; the sequence is KPAGAGAARPAVKKPAGAAPATTQAPAGAG. Residues 356–369 are compositionally biased toward gly residues; it reads SSGGVDRGWRGGPK. In terms of domain architecture, tr-type G spans 472-641; sequence PRPPVVTVMG…LLQAEVLELK (170 aa). Residues 481–488 are G1; sequence GHVDHGKT. 481–488 is a GTP binding site; that stretch reads GHVDHGKT. The G2 stretch occupies residues 506–510; it reads GITQH. Residues 527–530 form a G3 region; sequence DTPG. GTP is bound by residues 527 to 531 and 581 to 584; these read DTPGH and NKID. Residues 581 to 584 are G4; sequence NKID. Residues 617–619 form a G5 region; that stretch reads SAK.

This sequence belongs to the TRAFAC class translation factor GTPase superfamily. Classic translation factor GTPase family. IF-2 subfamily.

It is found in the cytoplasm. Functionally, one of the essential components for the initiation of protein synthesis. Protects formylmethionyl-tRNA from spontaneous hydrolysis and promotes its binding to the 30S ribosomal subunits. Also involved in the hydrolysis of GTP during the formation of the 70S ribosomal complex. This chain is Translation initiation factor IF-2, found in Burkholderia ambifaria (strain MC40-6).